Here is a 598-residue protein sequence, read N- to C-terminus: 2-succinyl-5-enolpyruvyl-6-hydroxy-3-cyclohexene-1-carboxylate synthase (598 aa).

Belongs to the TPP enzyme family. MenD subfamily. In terms of assembly, homodimer. It depends on Mg(2+) as a cofactor. Requires Mn(2+) as cofactor. Thiamine diphosphate serves as cofactor.

It catalyses the reaction isochorismate + 2-oxoglutarate + H(+) = 5-enolpyruvoyl-6-hydroxy-2-succinyl-cyclohex-3-ene-1-carboxylate + CO2. It functions in the pathway quinol/quinone metabolism; 1,4-dihydroxy-2-naphthoate biosynthesis; 1,4-dihydroxy-2-naphthoate from chorismate: step 2/7. Its pathway is cofactor biosynthesis; phylloquinone biosynthesis. Catalyzes the thiamine diphosphate-dependent decarboxylation of 2-oxoglutarate and the subsequent addition of the resulting succinic semialdehyde-thiamine pyrophosphate anion to isochorismate to yield 2-succinyl-5-enolpyruvyl-6-hydroxy-3-cyclohexene-1-carboxylate (SEPHCHC). This is 2-succinyl-5-enolpyruvyl-6-hydroxy-3-cyclohexene-1-carboxylate synthase from Prochlorococcus marinus (strain NATL1A).